Consider the following 145-residue polypeptide: Basic phospholipase A2 S6-45 (145 aa).

A signal peptide spans 1-19 (MYPAHLLVLLAVCVSLLGA). The propeptide occupies 20–27 (SDIPPQPL). 7 disulfides stabilise this stretch: Cys38/Cys99, Cys54/Cys144, Cys56/Cys72, Cys71/Cys127, Cys78/Cys120, Cys88/Cys113, and Cys106/Cys118. Residues Tyr55, Gly57, and Gly59 each contribute to the Ca(2+) site. Residue His75 is part of the active site. Asp76 is a binding site for Ca(2+). Asp121 is an active-site residue.

Belongs to the phospholipase A2 family. Group I subfamily. D49 sub-subfamily. It depends on Ca(2+) as a cofactor. Expressed by the venom gland.

The protein resides in the secreted. It catalyses the reaction a 1,2-diacyl-sn-glycero-3-phosphocholine + H2O = a 1-acyl-sn-glycero-3-phosphocholine + a fatty acid + H(+). In terms of biological role, snake venom phospholipase A2 (PLA2) that inhibits collagen-induced platelet aggregation. PLA2 catalyzes the calcium-dependent hydrolysis of the 2-acyl groups in 3-sn-phosphoglycerides. The chain is Basic phospholipase A2 S6-45 from Austrelaps superbus (Lowland copperhead snake).